Reading from the N-terminus, the 104-residue chain is MRDPLFKGCTRPAMLMGVPATPLAVCSGTIALLGIWFSIAFLALFPVALLAMRIMIRRDDQQFRLIWLYLRMRWLSRDRTHAFWQSTVYAPLRYAERRRRLRKP.

Residues I30–L50 form a helical membrane-spanning segment.

It belongs to the virB3 family.

Its subcellular location is the cell membrane. The sequence is that of Type IV secretion system protein PtlB homolog (ptlB) from Bordetella parapertussis (strain 12822 / ATCC BAA-587 / NCTC 13253).